Consider the following 155-residue polypeptide: Ribosome-binding factor A (155 aa).

2 stretches are compositionally biased toward basic and acidic residues: residues Ala-116–Arg-125 and Ser-142–Trp-155. Residues Ala-116–Trp-155 form a disordered region.

Belongs to the RbfA family. As to quaternary structure, monomer. Binds 30S ribosomal subunits, but not 50S ribosomal subunits or 70S ribosomes.

It localises to the cytoplasm. Its function is as follows. One of several proteins that assist in the late maturation steps of the functional core of the 30S ribosomal subunit. Associates with free 30S ribosomal subunits (but not with 30S subunits that are part of 70S ribosomes or polysomes). Required for efficient processing of 16S rRNA. May interact with the 5'-terminal helix region of 16S rRNA. The polypeptide is Ribosome-binding factor A (Corynebacterium kroppenstedtii (strain DSM 44385 / JCM 11950 / CIP 105744 / CCUG 35717)).